The following is a 230-amino-acid chain: Carbohydrate deacetylase (230 aa).

Residues histidine 59 and histidine 123 each coordinate Mg(2+).

It belongs to the YdjC deacetylase family. As to quaternary structure, homodimer. It depends on Mg(2+) as a cofactor.

Its function is as follows. Probably catalyzes the deacetylation of acetylated carbohydrates an important step in the degradation of oligosaccharides. The chain is Carbohydrate deacetylase from Oceanobacillus iheyensis (strain DSM 14371 / CIP 107618 / JCM 11309 / KCTC 3954 / HTE831).